A 227-amino-acid chain; its full sequence is Orotidine 5'-phosphate decarboxylase (227 aa).

Substrate contacts are provided by residues Asp-8, Lys-30, 58–67 (DLKVHDIPNT), Thr-117, Arg-177, Gln-186, Gly-206, and Arg-207. Lys-60 serves as the catalytic Proton donor.

The protein belongs to the OMP decarboxylase family. Type 1 subfamily. As to quaternary structure, homodimer.

The catalysed reaction is orotidine 5'-phosphate + H(+) = UMP + CO2. Its pathway is pyrimidine metabolism; UMP biosynthesis via de novo pathway; UMP from orotate: step 2/2. Catalyzes the decarboxylation of orotidine 5'-monophosphate (OMP) to uridine 5'-monophosphate (UMP). The polypeptide is Orotidine 5'-phosphate decarboxylase (Campylobacter fetus subsp. fetus (strain 82-40)).